Here is a 327-residue protein sequence, read N- to C-terminus: NF-kappa-B inhibitor delta (327 aa).

The tract at residues 1–40 is disordered; that stretch reads MEDSLDTRLYPEPSLSQVGSWRVSSLPSGSPQLPSPTGPS. Over residues 14–23 the composition is skewed to polar residues; it reads SLSQVGSWRV. ANK repeat units lie at residues 62–97, 98–127, 131–160, 166–215, 220–250, and 257–290; these read EGDTLLHLFAARGLRWAAYAAAEVLQMYRQLDIREH, KGKTPLLVAAAANQPLIVEDLLSLGAEPNA, QGRSVLHVAATYGLPGVLSAVFKSGIQVDL, EGLT…SHTS, SNKTILHLAVQAANPTLVQLLLGLPRGDLRA, and HGNTALHMAAALPPGPPQEAIVRHLLAAGADPTL. The segment at 293–327 is disordered; it reads LENEQPVHLLRPGPGPEGLRQLLKRSRTAPPGLSS.

It belongs to the NF-kappa-B inhibitor family. Interacts with NFKB1, RELA and RELB; in the nucleus. In terms of tissue distribution, specifically expressed in spleen and at low levels in thymus. Expressed in a population of antigen-presenting dendritic cells which may act as regulators of systemic inflammatory response.

The protein localises to the nucleus. In terms of biological role, regulates the expression of IL-2, IL-6, and other cytokines through regulation on NF-kappa-B activity. Functions in the regulation of inflammatory responses. Involved in the induction of T helper 17 cells (Th17) differentiation upon recognition of antigen by T cell antigen receptor (TCR). According to PubMed:11931770, it may also regulate TCR-induced negative selection of thymocytes. This is NF-kappa-B inhibitor delta (Nfkbid) from Mus musculus (Mouse).